We begin with the raw amino-acid sequence, 543 residues long: Terpineol synthase, chloroplastic (543 aa).

A disordered region spans residues 1-22; that stretch reads MNTEPSPNHYSAISSSDQNLTR. (2E)-geranyl diphosphate-binding residues include arginine 263, aspartate 300, aspartate 304, arginine 435, and asparagine 438. 2 residues coordinate Mg(2+): aspartate 300 and aspartate 304. The DDXXD motif signature appears at 300–304; that stretch reads DDVYD. The Mg(2+) site is built by asparagine 438, threonine 442, and glutamate 446.

The protein belongs to the terpene synthase family. Tpsb subfamily. In terms of assembly, monomer. Mg(2+) serves as cofactor. Mn(2+) is required as a cofactor. In terms of tissue distribution, confined to flowers.

It localises to the plastid. Its subcellular location is the chloroplast. The enzyme catalyses (2E)-geranyl diphosphate + H2O = (S)-alpha-terpineol + diphosphate. It catalyses the reaction (2E)-geranyl diphosphate = sabinene + diphosphate. It carries out the reaction (2E)-geranyl diphosphate = beta-myrcene + diphosphate. The catalysed reaction is (2E)-geranyl diphosphate = limonene + diphosphate. The enzyme catalyses (2E)-geranyl diphosphate + H2O = 1,8-cineole + diphosphate. It functions in the pathway secondary metabolite biosynthesis; terpenoid biosynthesis. Its function is as follows. Monoterpene synthase (TPS) involved in the biosynthesis of monoterpene natural products of the 'cineole cassette', volatile compounds present in floral scent. Catalyzes the conversion of (2E)-geranyl diphosphate (GPP) into alpha-terpineol and, as minor products, sabinene, beta-myrcene, limonene and 1,8-cineole. The protein is Terpineol synthase, chloroplastic of Nicotiana alata (Winged tobacco).